The following is a 238-amino-acid chain: MEKGQMLYEGKAKKVYTTDQEGIYWVEYKDDATAFNGEKKGTIGDKGIVNNRLSALLFEVLEKTGIPTHFIELLNDREMLVRKLEMIPLEVVVRNIAAGSLAKRLGVAEGLKLSRPVVELYYKDDALGDPFVNESHSLAMGWAEERDLKEIQELGLKINGELQKILDQAGIILVDFKLEFGKAEGKVYLGDEISPDTCRFWDKETQEKLDKDRFRRDLGKVEEAYAEVYRRVKEVLKD.

The protein belongs to the SAICAR synthetase family.

It carries out the reaction 5-amino-1-(5-phospho-D-ribosyl)imidazole-4-carboxylate + L-aspartate + ATP = (2S)-2-[5-amino-1-(5-phospho-beta-D-ribosyl)imidazole-4-carboxamido]succinate + ADP + phosphate + 2 H(+). Its pathway is purine metabolism; IMP biosynthesis via de novo pathway; 5-amino-1-(5-phospho-D-ribosyl)imidazole-4-carboxamide from 5-amino-1-(5-phospho-D-ribosyl)imidazole-4-carboxylate: step 1/2. This chain is Phosphoribosylaminoimidazole-succinocarboxamide synthase, found in Desulfitobacterium hafniense (strain Y51).